Here is a 281-residue protein sequence, read N- to C-terminus: NADPH-dependent 7-cyano-7-deazaguanine reductase (281 aa).

88–90 is a substrate binding site; that stretch reads IES. 90–91 provides a ligand contact to NADPH; it reads SK. Catalysis depends on C189, which acts as the Thioimide intermediate. Residue D196 is the Proton donor of the active site. A substrate-binding site is contributed by 228-229; that stretch reads HE. 257 to 258 contacts NADPH; sequence RG.

Belongs to the GTP cyclohydrolase I family. QueF type 2 subfamily. In terms of assembly, homodimer.

It is found in the cytoplasm. The enzyme catalyses 7-aminomethyl-7-carbaguanine + 2 NADP(+) = 7-cyano-7-deazaguanine + 2 NADPH + 3 H(+). It functions in the pathway tRNA modification; tRNA-queuosine biosynthesis. In terms of biological role, catalyzes the NADPH-dependent reduction of 7-cyano-7-deazaguanine (preQ0) to 7-aminomethyl-7-deazaguanine (preQ1). The polypeptide is NADPH-dependent 7-cyano-7-deazaguanine reductase (Yersinia pestis bv. Antiqua (strain Antiqua)).